A 355-amino-acid chain; its full sequence is uncharacterized protein (355 aa).

It belongs to the TmcAL family.

This is an uncharacterized protein from Methanocaldococcus jannaschii (strain ATCC 43067 / DSM 2661 / JAL-1 / JCM 10045 / NBRC 100440) (Methanococcus jannaschii).